The following is a 594-amino-acid chain: MRSLLSFVLLALARIAISEETKSCIDIEKGFKEEFNAHKQPVCICADNGIFSTVKGFTIECESASIASVSENLASLNGTELGRLTIRDSTVNVLPQDLFENVFAKQVKLERCGLSTLQPNSFQSLGGSAELLSLRENRIKKLEKGLFTGLKSLKTLDLAMNKIQEIDVGAFEELKKVEELLLNENDIRVLKTGTFDGMKNLKKLTLQNCNLEIIQKGAFRGLNSLEQLILSNNNLENIDWTIFSALKNLRVLDLGSNKISNVEMKSFPKLEKLVLNNNTIDSMKSIKLKDLPSLVVALFDRNKIESIGDMDMFGLTRSDRIETLSLARNNLSQISPKAFQHTPNLITLLLQYNQIEELSSHSPSQVRTPFLASLKKLVTLQLSSNNLSVIRSDELPKSLSSLALDHNVISKIEARALEGMEIKRLYLHSNKLNYLYQGTFDSFSPKSVEAVDVSLNPWVCVCNDPKEWLPRWLEASEEADVAEGALGCLAIPNCGQKEGSTVMPEEEEVYRSGWITVAATILTIVTIVIMVIIAMLYFKDARYQFPLRGRRSDSDLHKLIENDPLNIASDSILVVPAMPKRNTGPKKTVRFQNF.

A signal peptide spans 1–18 (MRSLLSFVLLALARIAIS). Over 19–513 (EETKSCIDIE…PEEEEVYRSG (495 aa)) the chain is Extracellular. 15 LRR repeats span residues 78–101 (GTEL…LFEN), 103–124 (FAKQ…SFQS), 125–149 (LGGS…LFTG), 150–173 (LKSL…AFEE), 175–197 (KKVE…TFDG), 198–221 (MKNL…AFRG), 222–245 (LNSL…IFSA), 246–269 (LKNL…SFPK), 271–290 (EKLV…KLKD), 291–315 (LPSL…MFGL), 318–341 (SDRI…AFQH), 343–365 (PNLI…SPSQ), 374–397 (LKKL…ELPK), 399–419 (LSSL…ALEG), and 420–442 (MEIK…TFDS). Residues 514–534 (WITVAATILTIVTIVIMVIIA) traverse the membrane as a helical segment. Residues 535–594 (MLYFKDARYQFPLRGRRSDSDLHKLIENDPLNIASDSILVVPAMPKRNTGPKKTVRFQNF) are Cytoplasmic-facing.

Interacts with glh-1. Interacts (via LRR regions) with myrf-1 (via C-terminus); the interaction promotes the role of myrf-1 in the synaptic remodeling of DD GABAergic motor neurons at the cell membrane. As to expression, expressed in the germline and somatic cells. Expressed in the germline and somatic cells. Expressed at higher levels in germline cells relative to somatic cells. In terms of tissue distribution, expressed in germline cells. As to expression, highly expressed in the pharynx and at lower levels in the intestine, but not detected in other tissues. Other studies suggest a broader expression pattern in somatic tissues: from embryogenesis to adult stages, expressed strongly in body wall muscle, vulva, somatic gonad and pharynx, at lower levels in the nerve ring, hypodermis, and rectal epithelia, and very weakly in the intestine.

It is found in the cytoplasm. The protein resides in the apical cell membrane. Functionally, regulates diverse developmental processes including larval molting and gonad maturation. Its function is as follows. Promotes the localization of myrf-1 and myrf-2 to the cell membrane. In association with myrf-1, promotes the synaptic remodeling of DD GABAergic motor neurons whereby new synapses form in the dorsal processes of DD neurons. The protein is P-granule-associated novel protein 1 of Caenorhabditis elegans.